The following is a 310-amino-acid chain: Protein RL1 (310 aa).

The span at 1–12 shows a compositional bias: polar residues; that stretch reads MPATDTNSTHTT. A disordered region spans residues 1–44; the sequence is MPATDTNSTHTTPLHPEDQHTLPLHHSTTQPHVQTSDKHADKQH. Positions 35–44 are enriched in basic and acidic residues; it reads TSDKHADKQH. The tract at residues 153–159 is involved in the interaction with host DDB1; sequence LLLARQR. The interval 205–252 is disordered; sequence ERPSAGEAQARGLLPRIRITPISTSPRPKPPQPTTSTASHPHATARPD. Low complexity predominate over residues 238 to 248; that stretch reads TTSTASHPHAT.

Belongs to the HHV-5 HKLF1 family. Interacts with host adaptor protein DDB1; this interaction allows RL1 to recruit the cullin4-RING E3 ubiquitin ligase (CRL4) complex and promote SLN11 degradation.

Degrades the host antiviral factor SLFN11 via the cullin4-RING E3 ubiquitin ligase (CRL4) complex. The sequence is that of Protein RL1 (RL1) from Human cytomegalovirus (strain Merlin) (HHV-5).